Here is a 121-residue protein sequence, read N- to C-terminus: Large ribosomal subunit protein uL18 (121 aa).

The protein belongs to the universal ribosomal protein uL18 family. As to quaternary structure, part of the 50S ribosomal subunit; part of the 5S rRNA/L5/L18/L25 subcomplex. Contacts the 5S and 23S rRNAs.

This is one of the proteins that bind and probably mediate the attachment of the 5S RNA into the large ribosomal subunit, where it forms part of the central protuberance. In Geobacter metallireducens (strain ATCC 53774 / DSM 7210 / GS-15), this protein is Large ribosomal subunit protein uL18.